Consider the following 215-residue polypeptide: Cytochrome b6 (215 aa).

Residues 32 to 52 (IFYCFGGITFTCFLVQVATGF) traverse the membrane as a helical segment. Position 35 (Cys35) interacts with heme c. Residues His86 and His100 each contribute to the heme b site. A run of 3 helical transmembrane segments spans residues 90 to 110 (ASMM…TGGF), 116 to 136 (LTWV…VTGY), and 186 to 206 (LHTF…FLMI). The heme b site is built by His187 and His202.

This sequence belongs to the cytochrome b family. PetB subfamily. As to quaternary structure, the 4 large subunits of the cytochrome b6-f complex are cytochrome b6, subunit IV (17 kDa polypeptide, PetD), cytochrome f and the Rieske protein, while the 4 small subunits are PetG, PetL, PetM and PetN. The complex functions as a dimer. It depends on heme b as a cofactor. The cofactor is heme c.

It localises to the plastid. Its subcellular location is the chloroplast thylakoid membrane. In terms of biological role, component of the cytochrome b6-f complex, which mediates electron transfer between photosystem II (PSII) and photosystem I (PSI), cyclic electron flow around PSI, and state transitions. The chain is Cytochrome b6 from Auxenochlorella protothecoides (Green microalga).